A 959-amino-acid chain; its full sequence is Kinesin-like protein NACK1 (959 aa).

The disordered stretch occupies residues 1–28 (MTVRTPGTPASKIDKTPATTPNGHRGRE). The Kinesin motor domain maps to 30 to 353 (KIVVTVRLRP…LYFATRAKEV (324 aa)). An ATP-binding site is contributed by 117-124 (GQTSSGKT). Residue threonine 145 is modified to Phosphothreonine. Residues 362-429 (VVSDKQLVKH…LRRKLQEEQG (68 aa)) are a coiled coil. 4 disordered regions span residues 417–438 (VDELRRKLQEEQGPKPSESVSP), 451–473 (SPNLEEKAPVRSERTRNTMGRQS), 598–640 (LPSN…FLKS), and 658–700 (NRAP…SVNM). Composition is skewed to basic and acidic residues over residues 418–429 (DELRRKLQEEQG) and 454–466 (LEEKAPVRSERTR). Residues 557–598 (KSVSANLKEEIARLHSQGSTIADLEEQLENVQKSLDKLVMSL) adopt a coiled-coil conformation. A compositionally biased stretch (low complexity) spans 600-611 (SNNDQQSNNDTT). Over residues 613 to 623 (KAKHPSKKKKL) the composition is skewed to basic residues. Residues 630-640 (NSINRQNFLKS) show a composition bias toward polar residues. Phosphothreonine occurs at positions 675 and 690. The segment at 685-756 (SSKEGTPYRR…EANEAAGYNL (72 aa)) is required for the binding to NPK1.

This sequence belongs to the TRAFAC class myosin-kinesin ATPase superfamily. Kinesin family. KIN-7 subfamily. In terms of assembly, interacts (via C-terminus) with NPK1 (via C-terminus). In terms of processing, phosphorylated at Thr-145, Thr-675 and Thr-690 by CDKAs and CDKBs. The phosphorylation occurs before metaphase and inhibits the interaction with NPK1 preventing the transition to cytokinesis.

The protein localises to the cytoplasm. Its subcellular location is the nucleus. It is found in the cytoskeleton. The protein resides in the phragmoplast. Functionally, probable plus end-directed motor protein that functions in the NACK-PQR (NPK1-NQK1/MEK1-NRK1) MAP kinase signaling pathway, which is essential for somatic cell cytokinesis, especially for the cell-plate formation and its expansion. Regulates the activity and the localization of NPK1 by association through the non-catalytic region of the kinase. In Nicotiana tabacum (Common tobacco), this protein is Kinesin-like protein NACK1 (NACK1).